The primary structure comprises 367 residues: 3-dehydroquinate synthase (367 aa).

Residues 111-115, 135-136, Lys148, Lys157, and 175-178 contribute to the NAD(+) site; these read GVVGD, TS, and TLDT. Zn(2+)-binding residues include Glu190, His254, and His271.

Belongs to the sugar phosphate cyclases superfamily. Dehydroquinate synthase family. The cofactor is Co(2+). Requires Zn(2+) as cofactor. NAD(+) serves as cofactor.

The protein localises to the cytoplasm. It catalyses the reaction 7-phospho-2-dehydro-3-deoxy-D-arabino-heptonate = 3-dehydroquinate + phosphate. It participates in metabolic intermediate biosynthesis; chorismate biosynthesis; chorismate from D-erythrose 4-phosphate and phosphoenolpyruvate: step 2/7. Its function is as follows. Catalyzes the conversion of 3-deoxy-D-arabino-heptulosonate 7-phosphate (DAHP) to dehydroquinate (DHQ). The polypeptide is 3-dehydroquinate synthase (Salinibacter ruber (strain DSM 13855 / M31)).